Reading from the N-terminus, the 573-residue chain is Vacuolar protein 8 (573 aa).

A disordered region spans residues 1 to 36 (MAASAADRMGRQRMSGLSCSAPPRPTVVTNPGNKQD). Positions 27–36 (VVTNPGNKQD) are enriched in polar residues. ARM repeat units follow at residues 60–97 (NRGE…FAEI), 98–137 (TEKD…NLAV), 139–178 (NENK…NLAT), 180–219 (EANK…NMTH), 221–260 (DQNR…NIAV), 264–303 (NRKK…NLAS), 305–344 (SDYQ…NISI), 346–386 (PLNE…NLAA), and 430–469 (DELK…NLSS).

Belongs to the beta-catenin family.

The protein resides in the vacuole membrane. Its function is as follows. Functions in both vacuole inheritance and protein targeting from the cytoplasm to vacuole. The sequence is that of Vacuolar protein 8 (VAC8) from Yarrowia lipolytica (strain CLIB 122 / E 150) (Yeast).